Consider the following 490-residue polypeptide: 5'-3' exonuclease PLD3 (490 aa).

The Cytoplasmic portion of the chain corresponds to 1 to 38; sequence MKPKLMYQELKVPAEEPANELPMNEIEAWKAAEKKARW. Residues 39 to 59 traverse the membrane as a helical; Signal-anchor for type II membrane protein segment; sequence VLLVLILAVVGFGALMTQLFL. The Lumenal segment spans residues 60 to 490; it reads WEYGDLHLFG…DSVGNACRLL (431 aa). 2 disulfide bridges follow: cysteine 77-cysteine 239 and cysteine 81-cysteine 237. Asparagine 97 and asparagine 132 each carry an N-linked (GlcNAc...) asparagine glycan. A PLD phosphodiesterase 1 domain is found at 196–223; it reads THGVLHTKFWVVDQTHFYLGSANMDWRS. Residues histidine 201, lysine 203, and aspartate 208 contribute to the active site. Histidine 201 serves as the catalytic Proton donor. Residues histidine 201 and lysine 203 each coordinate phosphate. Asparagine 218 is a phosphate binding site. N-linked (GlcNAc...) asparagine glycosylation is found at asparagine 236, asparagine 284, and asparagine 387. Cysteine 366 and cysteine 487 form a disulfide bridge. Residues 411-437 enclose the PLD phosphodiesterase 2 domain; the sequence is YARVNHNKYMVTERATYIGTSNWSGNY. A phosphate-binding site is contributed by histidine 416. Histidine 416 (nucleophile) is an active-site residue. Phenylalanine 438 is a binding site for Mg(2+).

The protein belongs to the phospholipase D family. In terms of assembly, homodimer. Interacts with APP. In terms of processing, N-glycosylated. Proteolytically processed to a soluble active form that is stable within endosomes and lysosomes. During transport through the secretory pathway becomes proteolysed by cysteine proteases, thereby releasing a stable soluble lysosomal lumenal polypeptide, whereas the transmembrane-bound fragment is rapidly degraded. Its transport route to lysosomes involves ubiquitination and the ESCRT complex. Post-translationally, ubiquitinated at N-terminus. Ubiquitination mediates sorting into lysosomes. Widely expressed. In the brain, high levels of expression are detected in the frontal, temporal and occipital cortices and hippocampus. Expressed at low level in corpus callosum. Expressed in plasmacytoid dendritic cells and monocytes (at protein level).

The protein localises to the endoplasmic reticulum membrane. The protein resides in the lysosome lumen. It localises to the early endosome membrane. It is found in the late endosome membrane. Its subcellular location is the golgi apparatus membrane. The protein localises to the endosome membrane. The catalysed reaction is Exonucleolytic cleavage in the 5'- to 3'-direction to yield nucleoside 3'-phosphates.. It carries out the reaction a 5'-end 5'-dephospho-ribonucleotidyl-ribonucleotide-RNA + H2O = a ribonucleoside 3'-phosphate + a 5'-end dephospho-ribonucleoside-RNA + H(+). The enzyme catalyses a ribonucleoside 3'-phosphate-2'-3'-cyclophospho-GMP + H2O = a ribonucleoside 3'-phosphate + 2',3'-cyclophospho-GMP + H(+). It catalyses the reaction a 5'-end 5'-dephospho-2'-deoxyribonucleotidyl-2'-deoxyribonucleotide in single-stranded DNA + H2O = a 5'-end dephospho-2'-deoxyribonucleoside in single-stranded DNA + a 2'-deoxyribonucleoside 3'-phosphate + H(+). The catalysed reaction is a 5'-end 5'-phospho-2'-deoxyribonucleotide in single-stranded DNA + H2O = a 5'-end 5'-dephospho-2'-deoxyribonucleotide in single-stranded DNA + phosphate. It carries out the reaction a 3-lyso-sn-glycero-1-phospho-(3'-acyl-1'-sn-glycerol) + a 1-acyl-sn-glycerol = a 3-acyl-sn-glycero-1-phospho-(3'-acyl-1'-sn-glycerol) + glycerol. The enzyme catalyses 3-lyso-sn-glycero-1-phospho-(3'-(9Z-octadecenoyl)-1'-sn-glycerol) + 1-(9Z-octadecenoyl)-sn-glycerol = 3-(9Z-octadecenoyl)-sn-glycero-1-phospho-(3'-(9Z-octadecenoyl)-1'-sn-glycerol) + glycerol. Its activity is regulated as follows. The exonuclease activity toward ssDNA substrate is Ca(2+) and Mg(2+)-independent, but it is inhibited by Fe(2+), Cu(2+) and to a lesser extent Zn(2+) ions. Its function is as follows. 5'-&gt;3' exonuclease that hydrolyzes the phosphodiester bond of single-stranded DNA (ssDNA) and RNA molecules to form nucleoside 3'-monophosphates and 5'-end 5'-hydroxy deoxyribonucleotide/ribonucleotide fragments. Partially redundant with PLD4, can cleave all four nucleotides displaying higher efficiency for ssDNA and RNA fragments initiated with uridine and guanosine residues and lower efficiency for cytidine-initiated substrates. As a result, it does not always degrade polynucleotides to the single nucleotide level, it can stall at specific sites sparing certain fragments from exonucleolytic degradation. Processes self and pathogenic ssDNA and RNA molecules that reach the endolysosomal compartment via phagocytosis or autophagy and may serve as 'danger' signals for recognition by innate immune receptors such as toll-like receptors (TLRs). Degrades mitochondrial CpG-rich ssDNA fragments to prevent TLR9 activation and autoinflammatory response, but it can cleave viral RNA to generate ligands for TLR7 activation and initiate antiviral immune responses. In plasmacytoid dendritic cells, it cooperates with endonuclease RNASET2 to release 2',3'-cyclic guanosine monophosphate (2',3'-cGMP), a potent stimulatory ligand for TLR7. Produces 2',3'-cGMPs and cytidine-rich RNA fragments that occupy TLR7 ligand-binding pockets and trigger a signaling-competent state. Can exert polynucleotide phosphatase activity toward 5'-phosphorylated ssDNA substrates although at a slow rate. Transphosphatidylase that catalyzes the exchange with R to S stereo-inversion of the glycerol moiety between (S,R)-lysophosphatidylglycerol (LPG) and monoacylglycerol (MAG) substrates to yield (S,S)-bis(monoacylglycero)phosphate (BMP). Can synthesize a variety of (S,S)-BMPs representing the main phospholipid constituent of lysosomal intralumenal vesicle (ILV) membranes that bind acid hydrolases for lipid degradation. Regulates the homeostasis and interorganellar communication of the endolysosomal system with an overall impact on cellular removal of dysfunctional organelles via autophagy as well as proper protein and lipid turnover. May play a role in myotube formation in response to ER stress. This is 5'-3' exonuclease PLD3 from Homo sapiens (Human).